We begin with the raw amino-acid sequence, 262 residues long: Hydroxyethylthiazole kinase (262 aa).

Met44 serves as a coordination point for substrate. ATP-binding residues include Arg118 and Thr166. Position 193 (Gly193) interacts with substrate.

Belongs to the Thz kinase family. Requires Mg(2+) as cofactor.

It carries out the reaction 5-(2-hydroxyethyl)-4-methylthiazole + ATP = 4-methyl-5-(2-phosphooxyethyl)-thiazole + ADP + H(+). Its pathway is cofactor biosynthesis; thiamine diphosphate biosynthesis; 4-methyl-5-(2-phosphoethyl)-thiazole from 5-(2-hydroxyethyl)-4-methylthiazole: step 1/1. Its function is as follows. Catalyzes the phosphorylation of the hydroxyl group of 4-methyl-5-beta-hydroxyethylthiazole (THZ). This chain is Hydroxyethylthiazole kinase, found in Chlamydia felis (strain Fe/C-56) (Chlamydophila felis).